A 507-amino-acid polypeptide reads, in one-letter code: Nuclear distribution protein PAC1 (507 aa).

The stretch at 72–98 (STVLRLQRKIMDLTDEVSNLKTIIEAK) forms a coiled coil. WD repeat units lie at residues 125–164 (QTHQSVNTVAVHPYLPLIMAGCSDGTLSVWNIANDDPSIP), 170–222 (AHSR…QIRI), 225–265 (GHDH…CTRT), 268–312 (GHSD…GLCL), 315–389 (GHSH…VRPN), 410–449 (GHQSWVKTLQVHPNGRFIFSAGDDKSIRVWDLSTLATGGR), and 474–507 (PKDTTNEDILQDIESRMRCVFVSGGTDNTVRLWS).

The protein belongs to the WD repeat LIS1/nudF family. In terms of assembly, self-associates. Interacts with NDL1 and dynein.

It is found in the cytoplasm. Its subcellular location is the cytoskeleton. The protein localises to the spindle pole. Its function is as follows. Positively regulates the activity of the minus-end directed microtubule motor protein dynein. Plays a central role in positioning the mitotic spindle at the bud neck during cell division. Targets cytoplasmic dynein to microtubule plus ends, thereby promoting dynein-mediated microtubule sliding along the bud cortex and consequently the movement of the mitotic spindle to the bud neck. This is Nuclear distribution protein PAC1 from Meyerozyma guilliermondii (strain ATCC 6260 / CBS 566 / DSM 6381 / JCM 1539 / NBRC 10279 / NRRL Y-324) (Yeast).